Reading from the N-terminus, the 146-residue chain is Transcriptional regulator MraZ (146 aa).

SpoVT-AbrB domains follow at residues 5–47 (EYYH…TITD) and 76–119 (SVQV…AKER).

Belongs to the MraZ family. As to quaternary structure, forms oligomers.

It is found in the cytoplasm. It localises to the nucleoid. In Dictyoglomus turgidum (strain DSM 6724 / Z-1310), this protein is Transcriptional regulator MraZ.